Here is a 164-residue protein sequence, read N- to C-terminus: Interleukin-31 (164 aa).

Positions 1-23 (MASHSGPSTSVLFLFCCLGGWLA) are cleaved as a signal peptide. N-linked (GlcNAc...) asparagine glycosylation is found at Asn-67 and Asn-100.

In terms of tissue distribution, detected at low levels in testis, bone marrow, skeletal muscle, kidney, colon, thymus, small intestine and trachea.

It localises to the secreted. In terms of biological role, activates STAT3 and possibly STAT1 and STAT5 through the IL31 heterodimeric receptor composed of IL31RA and OSMR. May function in skin immunity. Enhances myeloid progenitor cell survival in vitro. Induces RETNLA and serum amyloid A protein expression in macrophages. The sequence is that of Interleukin-31 (IL31) from Homo sapiens (Human).